A 268-amino-acid chain; its full sequence is Cytolethal distending toxin subunit A (268 aa).

Positions 1–19 (MQKIIVFILCCFMTFFLYA) are cleaved as a signal peptide. The N-palmitoyl cysteine moiety is linked to residue C20. The S-diacylglycerol cysteine moiety is linked to residue C20. The region spanning 112–252 (VSDFLTILGP…DNFDQQWFLT (141 aa)) is the Ricin B-type lectin domain. Residues 129 to 140 (WALAQGNWIWGY) form a mediates binding to target cells region.

In terms of assembly, heterotrimer of 3 subunits, CdtA, CdtB and CdtC.

It is found in the cell outer membrane. Functionally, CDTs are cytotoxins which induce cell distension, growth arrest in G2/M phase, nucleus swelling, and chromatin fragmentation in HeLa cells. The chain is Cytolethal distending toxin subunit A (cdtA) from Campylobacter jejuni subsp. jejuni serotype O:2 (strain ATCC 700819 / NCTC 11168).